Here is a 263-residue protein sequence, read N- to C-terminus: E3 ubiquitin-protein ligase SINA-like 8 (263 aa).

The RING-type; degenerate zinc-finger motif lies at Cys35–Pro71. The interval Ile75–Asn261 is SBD. Residues Ser78–Ile136 form an SIAH-type zinc finger. Zn(2+) contacts are provided by Cys83, Cys90, His102, Cys106, Cys113, Cys118, His130, and His135.

Belongs to the SINA (Seven in absentia) family.

The catalysed reaction is S-ubiquitinyl-[E2 ubiquitin-conjugating enzyme]-L-cysteine + [acceptor protein]-L-lysine = [E2 ubiquitin-conjugating enzyme]-L-cysteine + N(6)-ubiquitinyl-[acceptor protein]-L-lysine.. It functions in the pathway protein modification; protein ubiquitination. Functionally, E3 ubiquitin-protein ligase that mediates ubiquitination and subsequent proteasomal degradation of target proteins. E3 ubiquitin ligases accept ubiquitin from an E2 ubiquitin-conjugating enzyme in the form of a thioester and then directly transfers the ubiquitin to targeted substrates. It probably triggers the ubiquitin-mediated degradation of different substrates. This is E3 ubiquitin-protein ligase SINA-like 8 from Arabidopsis thaliana (Mouse-ear cress).